Consider the following 574-residue polypeptide: Isocitrate dehydrogenase kinase/phosphatase (574 aa).

ATP contacts are provided by residues 311–317 (APGIRGM) and Lys-332. Asp-367 is a catalytic residue.

It belongs to the AceK family.

It is found in the cytoplasm. It carries out the reaction L-seryl-[isocitrate dehydrogenase] + ATP = O-phospho-L-seryl-[isocitrate dehydrogenase] + ADP + H(+). Its function is as follows. Bifunctional enzyme which can phosphorylate or dephosphorylate isocitrate dehydrogenase (IDH) on a specific serine residue. This is a regulatory mechanism which enables bacteria to bypass the Krebs cycle via the glyoxylate shunt in response to the source of carbon. When bacteria are grown on glucose, IDH is fully active and unphosphorylated, but when grown on acetate or ethanol, the activity of IDH declines drastically concomitant with its phosphorylation. In Shigella boydii serotype 4 (strain Sb227), this protein is Isocitrate dehydrogenase kinase/phosphatase.